Consider the following 755-residue polypeptide: Xaa-Pro dipeptidyl-peptidase (755 aa).

Residues S348, D468, and H498 each act as charge relay system in the active site.

Belongs to the peptidase S15 family. Homodimer.

The protein resides in the cytoplasm. It catalyses the reaction Hydrolyzes Xaa-Pro-|- bonds to release unblocked, N-terminal dipeptides from substrates including Ala-Pro-|-p-nitroanilide and (sequentially) Tyr-Pro-|-Phe-Pro-|-Gly-Pro-|-Ile.. In terms of biological role, removes N-terminal dipeptides sequentially from polypeptides having unsubstituted N-termini provided that the penultimate residue is proline. This chain is Xaa-Pro dipeptidyl-peptidase, found in Streptococcus thermophilus (strain ATCC BAA-250 / LMG 18311).